Consider the following 481-residue polypeptide: Phospho-2-dehydro-3-deoxyheptonate aldolase (481 aa).

Positions 1 to 22 (MSQQTTPNAPGWAPDSWRSKPI) are disordered.

It belongs to the class-II DAHP synthase family. Homodimer. Post-translationally, the N-terminus is blocked.

The enzyme catalyses D-erythrose 4-phosphate + phosphoenolpyruvate + H2O = 7-phospho-2-dehydro-3-deoxy-D-arabino-heptonate + phosphate. It participates in metabolic intermediate biosynthesis; chorismate biosynthesis; chorismate from D-erythrose 4-phosphate and phosphoenolpyruvate: step 1/7. The chain is Phospho-2-dehydro-3-deoxyheptonate aldolase (aro-8) from Neurospora crassa (strain ATCC 24698 / 74-OR23-1A / CBS 708.71 / DSM 1257 / FGSC 987).